A 310-amino-acid polypeptide reads, in one-letter code: 4-hydroxy-3-methylbut-2-enyl diphosphate reductase (310 aa).

Cysteine 12 is a [4Fe-4S] cluster binding site. Residues histidine 41 and histidine 74 each contribute to the (2E)-4-hydroxy-3-methylbut-2-enyl diphosphate site. Positions 41 and 74 each coordinate dimethylallyl diphosphate. Histidine 41 and histidine 74 together coordinate isopentenyl diphosphate. Cysteine 96 contributes to the [4Fe-4S] cluster binding site. Histidine 124 is a (2E)-4-hydroxy-3-methylbut-2-enyl diphosphate binding site. Position 124 (histidine 124) interacts with dimethylallyl diphosphate. Position 124 (histidine 124) interacts with isopentenyl diphosphate. Glutamate 126 serves as the catalytic Proton donor. Residue threonine 167 coordinates (2E)-4-hydroxy-3-methylbut-2-enyl diphosphate. Cysteine 197 lines the [4Fe-4S] cluster pocket. (2E)-4-hydroxy-3-methylbut-2-enyl diphosphate contacts are provided by serine 225, serine 226, asparagine 227, and serine 269. Serine 225, serine 226, asparagine 227, and serine 269 together coordinate dimethylallyl diphosphate. Residues serine 225, serine 226, asparagine 227, and serine 269 each contribute to the isopentenyl diphosphate site.

Belongs to the IspH family. It depends on [4Fe-4S] cluster as a cofactor.

The enzyme catalyses isopentenyl diphosphate + 2 oxidized [2Fe-2S]-[ferredoxin] + H2O = (2E)-4-hydroxy-3-methylbut-2-enyl diphosphate + 2 reduced [2Fe-2S]-[ferredoxin] + 2 H(+). The catalysed reaction is dimethylallyl diphosphate + 2 oxidized [2Fe-2S]-[ferredoxin] + H2O = (2E)-4-hydroxy-3-methylbut-2-enyl diphosphate + 2 reduced [2Fe-2S]-[ferredoxin] + 2 H(+). The protein operates within isoprenoid biosynthesis; dimethylallyl diphosphate biosynthesis; dimethylallyl diphosphate from (2E)-4-hydroxy-3-methylbutenyl diphosphate: step 1/1. It participates in isoprenoid biosynthesis; isopentenyl diphosphate biosynthesis via DXP pathway; isopentenyl diphosphate from 1-deoxy-D-xylulose 5-phosphate: step 6/6. In terms of biological role, catalyzes the conversion of 1-hydroxy-2-methyl-2-(E)-butenyl 4-diphosphate (HMBPP) into a mixture of isopentenyl diphosphate (IPP) and dimethylallyl diphosphate (DMAPP). Acts in the terminal step of the DOXP/MEP pathway for isoprenoid precursor biosynthesis. The sequence is that of 4-hydroxy-3-methylbut-2-enyl diphosphate reductase from Tolumonas auensis (strain DSM 9187 / NBRC 110442 / TA 4).